The primary structure comprises 773 residues: Disintegrin and metalloproteinase domain-containing protein 11 (773 aa).

The N-terminal stretch at 1 to 24 (MRRLRRWAIAALLLLPLLPPPGLG) is a signal peptide. The propeptide occupies 25 to 229 (ALGPRGALHW…PNWPKLRRKR (205 aa)). The disordered stretch occupies residues 36–82 (SSAHVGSPESPEGSEVTEPSRLVRQSSGGEVRKPQLDTRVRQDPPRG). Residues 65–79 (EVRKPQLDTRVRQDP) show a composition bias toward basic and acidic residues. N-linked (GlcNAc...) asparagine glycosylation is found at N100 and N167. At 230-738 (QVRRGHPTVH…ERYKGPSGTN (509 aa)) the chain is on the extracellular side. Residues 243-442 (KYVELIVIND…GGGSCLFNKP (200 aa)) form the Peptidase M12B domain. Residues 336–773 (GRTFQSTSSG…NIRRGRSGGA (438 aa)) form a required for localization to cerebellar cortex basket cell terminals. Also required for localization of KCNA1, KCNA2, DLG4 and ADAM22 to cerebellar cortex basket cell terminal perisomatic axons and pinceaux region. 4 disulfide bridges follow: C353/C437, C396/C421, C398/C405, and C507/C527. The Disintegrin domain occupies 448–535 (PPECGNGFVE…QCPPNLHKLD (88 aa)). Residues N609 and N677 are each glycosylated (N-linked (GlcNAc...) asparagine). 3 cysteine pairs are disulfide-bonded: C681–C696, C690–C702, and C704–C713. The EGF-like domain maps to 681–713 (CPGSGERRICSHHGVCSNEGKCICQPDWTGKDC). The chain crosses the membrane as a helical span at residues 739–759 (IIIGSIAGAVLVAAIVLGGTG). The Cytoplasmic segment spans residues 760-773 (WGFKNIRRGRSGGA).

In terms of assembly, interacts with LGI1 and LGI4. Interacts with KCNA1/KV1.1, KCNA2/KV1.2, DLG4/PSD-95 and ADAM22. In terms of processing, the precursor is cleaved by a furin endopeptidase. As to expression, abundantly expressed in cerebellar cortex basket cell terminals and pinceaux, weakly expressed in Purkinje cells (at protein level). Weakly expressed in the heart. Abundantly in expressed in neurons throughout the central nervous system including the telencephalon, diencephalic and brainstem nuclei, cerebellum and spinal cord. Expressed in the peripheral nervous system trigeminal and dorsal root ganglia. Expressed in the ganglion and bipolar cells of the retinae and weakly in the cornea of the eyes. Expressed in the hepatocytes of the parenchyma and hepatic lobules of the liver. Expressed in distinct focal areas in the juxtamedullary cortex of the kidney. Expressed in spermatocytes in the seminiferous tubules of the testes. Expressed in the stratum spinosum of the stratified squamous epithelia of the tongue and esophagus.

It localises to the presynaptic cell membrane. The protein localises to the perikaryon. The protein resides in the cell projection. It is found in the axon. Probable ligand for integrin in the brain. This is a non catalytic metalloprotease-like protein. Required for localization of the potassium channel subunit proteins KCNA1/KV1.1 and KCNA2/KV1.2 at cerebellar cortex basket cell distal terminals, is thereby involved in ephaptic inhibitory synchronization of Purkinje cell firing and response to stress. Plays a role in spatial learning and motor coordination. Involved in the nociceptive pain response to chemical-derived stimulation. The polypeptide is Disintegrin and metalloproteinase domain-containing protein 11 (Adam11) (Mus musculus (Mouse)).